The sequence spans 117 residues: Large ribosomal subunit protein bL19 (117 aa).

It belongs to the bacterial ribosomal protein bL19 family.

Its function is as follows. This protein is located at the 30S-50S ribosomal subunit interface and may play a role in the structure and function of the aminoacyl-tRNA binding site. This is Large ribosomal subunit protein bL19 from Photorhabdus laumondii subsp. laumondii (strain DSM 15139 / CIP 105565 / TT01) (Photorhabdus luminescens subsp. laumondii).